Reading from the N-terminus, the 336-residue chain is Small ribosomal subunit protein RACK1y (336 aa).

7 WD repeats span residues 15–55 (GHND…TAVA), 74–113 (GHSH…TTRR), 116–155 (GHTK…KYTI), 164–205 (GHTG…LRTK), 208–247 (GHNG…MLYK), 249–287 (DAGA…VMQD), and 297–336 (SQML…GYAI).

This sequence belongs to the WD repeat G protein beta family. Ribosomal protein RACK1 subfamily. As to quaternary structure, homodimer and heterodimer with RACK1A.

Functionally, component of the RACK1 regulatory proteins that play a role in multiple signal transduction pathways. This is Small ribosomal subunit protein RACK1y (RACK1B) from Oryza sativa subsp. japonica (Rice).